Here is a 227-residue protein sequence, read N- to C-terminus: ATP synthase F(0) complex subunit a (227 aa).

A run of 6 helical transmembrane segments spans residues 14-34, 69-89, 99-119, 139-159, 165-185, and 190-210; these read FLGI…FPTP, WAIL…LGLL, LSLN…IGMF, VPVL…ALGV, LTAG…LLTM, and ALLT…VAMI.

This sequence belongs to the ATPase A chain family. As to quaternary structure, component of the ATP synthase complex composed at least of ATP5F1A/subunit alpha, ATP5F1B/subunit beta, ATP5MC1/subunit c (homooctomer), MT-ATP6/subunit a, MT-ATP8/subunit 8, ATP5ME/subunit e, ATP5MF/subunit f, ATP5MG/subunit g, ATP5MK/subunit k, ATP5MJ/subunit j, ATP5F1C/subunit gamma, ATP5F1D/subunit delta, ATP5F1E/subunit epsilon, ATP5PF/subunit F6, ATP5PB/subunit b, ATP5PD/subunit d, ATP5PO/subunit OSCP. ATP synthase complex consists of a soluble F(1) head domain (subunits alpha(3) and beta(3)) - the catalytic core - and a membrane F(0) domain - the membrane proton channel (subunits c, a, 8, e, f, g, k and j). These two domains are linked by a central stalk (subunits gamma, delta, and epsilon) rotating inside the F1 region and a stationary peripheral stalk (subunits F6, b, d, and OSCP). Interacts with DNAJC30; interaction is direct.

The protein localises to the mitochondrion inner membrane. The enzyme catalyses H(+)(in) = H(+)(out). Its function is as follows. Subunit a, of the mitochondrial membrane ATP synthase complex (F(1)F(0) ATP synthase or Complex V) that produces ATP from ADP in the presence of a proton gradient across the membrane which is generated by electron transport complexes of the respiratory chain. ATP synthase complex consist of a soluble F(1) head domain - the catalytic core - and a membrane F(1) domain - the membrane proton channel. These two domains are linked by a central stalk rotating inside the F(1) region and a stationary peripheral stalk. During catalysis, ATP synthesis in the catalytic domain of F(1) is coupled via a rotary mechanism of the central stalk subunits to proton translocation. With the subunit c (ATP5MC1), forms the proton-conducting channel in the F(0) domain, that contains two crucial half-channels (inlet and outlet) that facilitate proton movement from the mitochondrial intermembrane space (IMS) into the matrix. Protons are taken up via the inlet half-channel and released through the outlet half-channel, following a Grotthuss mechanism. This is ATP synthase F(0) complex subunit a from Scyliorhinus canicula (Small-spotted catshark).